We begin with the raw amino-acid sequence, 64 residues long: Defensin beta 4A (64 aa).

An N-terminal signal peptide occupies residues 1–23; the sequence is MRVLYLLFSFLFIFLMPLPGVFG. Disulfide bonds link cysteine 31/cysteine 60, cysteine 38/cysteine 53, and cysteine 43/cysteine 61. The tract at residues 33-48 is phosphatidylinositol 4,5-bisphosphate (PIP2) binding; that stretch reads KNGAICHPVFCPRRYK.

Belongs to the beta-defensin family. LAP/TAP subfamily. As to quaternary structure, monomer. Homodimer.

The protein localises to the secreted. Its function is as follows. Exhibits antimicrobial activity against Gram-negative bacteria and Gram-positive bacteria, with highest activity against Gram-negative bacteria. Antimicrobial activity against P.aruginosa seems to be salt-sensitive and is reduced with high salt concentrations greater than 25 mM. Also exhibits antimicrobial activity against the yeast C.albicans. Permeabilizes C.albicans cell membranes via targeting plasma membrane lipid phosphatidylinositol 4,5-bisphosphate (PIP2), thereby leading to cell fragmentation and cell death. Acts as a ligand for C-C chemokine receptor CCR6. Binds to CCR6 and induces chemotactic activity of CCR6-expressing cells, such as immature dendritic cells and memory T cells. The chain is Defensin beta 4A (DEFB4A) from Macaca mulatta (Rhesus macaque).